A 90-amino-acid chain; its full sequence is Large ribosomal subunit protein bL27 (90 aa).

The segment at 1 to 22 (MAHKKAGGSSRNGRDSESKRLG) is disordered.

It belongs to the bacterial ribosomal protein bL27 family.

This is Large ribosomal subunit protein bL27 from Allorhizobium ampelinum (strain ATCC BAA-846 / DSM 112012 / S4) (Agrobacterium vitis (strain S4)).